A 333-amino-acid chain; its full sequence is Ketol-acid reductoisomerase (NADP(+)) (333 aa).

In terms of domain architecture, KARI N-terminal Rossmann spans Met1 to Thr171. NADP(+)-binding positions include Tyr14–Gln17, Arg37, Thr42, and Asp72–Gln75. The active site involves His97. Gly123 is an NADP(+) binding site. The region spanning Thr172–Leu317 is the KARI C-terminal knotted domain. Mg(2+) is bound by residues Asp180, Glu184, Glu216, and Glu220. Ser241 contacts substrate.

The protein belongs to the ketol-acid reductoisomerase family. Requires Mg(2+) as cofactor.

The enzyme catalyses (2R)-2,3-dihydroxy-3-methylbutanoate + NADP(+) = (2S)-2-acetolactate + NADPH + H(+). It catalyses the reaction (2R,3R)-2,3-dihydroxy-3-methylpentanoate + NADP(+) = (S)-2-ethyl-2-hydroxy-3-oxobutanoate + NADPH + H(+). Its pathway is amino-acid biosynthesis; L-isoleucine biosynthesis; L-isoleucine from 2-oxobutanoate: step 2/4. The protein operates within amino-acid biosynthesis; L-valine biosynthesis; L-valine from pyruvate: step 2/4. In terms of biological role, involved in the biosynthesis of branched-chain amino acids (BCAA). Catalyzes an alkyl-migration followed by a ketol-acid reduction of (S)-2-acetolactate (S2AL) to yield (R)-2,3-dihydroxy-isovalerate. In the isomerase reaction, S2AL is rearranged via a Mg-dependent methyl migration to produce 3-hydroxy-3-methyl-2-ketobutyrate (HMKB). In the reductase reaction, this 2-ketoacid undergoes a metal-dependent reduction by NADPH to yield (R)-2,3-dihydroxy-isovalerate. This is Ketol-acid reductoisomerase (NADP(+)) from Xanthomonas campestris pv. campestris (strain 8004).